Here is a 384-residue protein sequence, read N- to C-terminus: Deoxyguanosinetriphosphate triphosphohydrolase-like protein (384 aa).

In terms of domain architecture, HD spans 62–198; sequence RLTHSLEVST…AALADDISYI (137 aa).

The protein belongs to the dGTPase family. Type 2 subfamily.

The protein is Deoxyguanosinetriphosphate triphosphohydrolase-like protein of Rickettsia peacockii (strain Rustic).